The sequence spans 353 residues: Uroporphyrinogen decarboxylase (353 aa).

Substrate-binding positions include 30-34, Asp79, Tyr154, Ser209, and His332; that span reads RQAGR.

The protein belongs to the uroporphyrinogen decarboxylase family. In terms of assembly, homodimer.

It localises to the cytoplasm. It carries out the reaction uroporphyrinogen III + 4 H(+) = coproporphyrinogen III + 4 CO2. Its pathway is porphyrin-containing compound metabolism; protoporphyrin-IX biosynthesis; coproporphyrinogen-III from 5-aminolevulinate: step 4/4. Its function is as follows. Catalyzes the decarboxylation of four acetate groups of uroporphyrinogen-III to yield coproporphyrinogen-III. This chain is Uroporphyrinogen decarboxylase, found in Mycobacterium ulcerans (strain Agy99).